The following is a 405-amino-acid chain: Cysteine desulfurase IscS (405 aa).

Asn156 serves as a coordination point for pyridoxal 5'-phosphate. Lys207 carries the N6-(pyridoxal phosphate)lysine modification. Cys329 functions as the Cysteine persulfide intermediate in the catalytic mechanism. Cys329 contributes to the [2Fe-2S] cluster binding site.

Belongs to the class-V pyridoxal-phosphate-dependent aminotransferase family. NifS/IscS subfamily. In terms of assembly, homodimer. Forms a heterotetramer with IscU, interacts with other sulfur acceptors. Requires pyridoxal 5'-phosphate as cofactor.

It is found in the cytoplasm. It catalyses the reaction (sulfur carrier)-H + L-cysteine = (sulfur carrier)-SH + L-alanine. The protein operates within cofactor biosynthesis; iron-sulfur cluster biosynthesis. Master enzyme that delivers sulfur to a number of partners involved in Fe-S cluster assembly, tRNA modification or cofactor biosynthesis. Catalyzes the removal of elemental sulfur atoms from cysteine to produce alanine. Functions as a sulfur delivery protein for Fe-S cluster synthesis onto IscU, an Fe-S scaffold assembly protein, as well as other S acceptor proteins. In Dechloromonas aromatica (strain RCB), this protein is Cysteine desulfurase IscS.